A 342-amino-acid chain; its full sequence is DNA primase small subunit PriS (342 aa).

Active-site residues include Asp97, Asp99, and Asp236.

The protein belongs to the eukaryotic-type primase small subunit family. As to quaternary structure, heterodimer of a small subunit (PriS) and a large subunit (PriL). Mg(2+) serves as cofactor. Requires Mn(2+) as cofactor.

Functionally, catalytic subunit of DNA primase, an RNA polymerase that catalyzes the synthesis of short RNA molecules used as primers for DNA polymerase during DNA replication. The small subunit contains the primase catalytic core and has DNA synthesis activity on its own. Binding to the large subunit stabilizes and modulates the activity, increasing the rate of DNA synthesis while decreasing the length of the DNA fragments, and conferring RNA synthesis capability. The DNA polymerase activity may enable DNA primase to also catalyze primer extension after primer synthesis. May also play a role in DNA repair. The polypeptide is DNA primase small subunit PriS (Aeropyrum pernix (strain ATCC 700893 / DSM 11879 / JCM 9820 / NBRC 100138 / K1)).